Consider the following 73-residue polypeptide: uncharacterized protein (73 aa).

This is an uncharacterized protein from Vertebrata (FPV).